The sequence spans 179 residues: Large ribosomal subunit protein uL5 (179 aa).

The protein belongs to the universal ribosomal protein uL5 family. In terms of assembly, part of the 50S ribosomal subunit; part of the 5S rRNA/L5/L18/L25 subcomplex. Contacts the 5S rRNA and the P site tRNA. Forms a bridge to the 30S subunit in the 70S ribosome.

Its function is as follows. This is one of the proteins that bind and probably mediate the attachment of the 5S RNA into the large ribosomal subunit, where it forms part of the central protuberance. In the 70S ribosome it contacts protein S13 of the 30S subunit (bridge B1b), connecting the 2 subunits; this bridge is implicated in subunit movement. Contacts the P site tRNA; the 5S rRNA and some of its associated proteins might help stabilize positioning of ribosome-bound tRNAs. This Shewanella putrefaciens (strain CN-32 / ATCC BAA-453) protein is Large ribosomal subunit protein uL5.